The sequence spans 234 residues: Uridylate kinase (234 aa).

9–12 lines the ATP pocket; the sequence is KLSG. G51 is a binding site for UMP. ATP is bound by residues G52 and R56. Residues D71 and 132–139 contribute to the UMP site; that span reads CGNPFFTT. Residues T159, Y165, and D168 each contribute to the ATP site.

This sequence belongs to the UMP kinase family. In terms of assembly, homohexamer.

Its subcellular location is the cytoplasm. It carries out the reaction UMP + ATP = UDP + ADP. It functions in the pathway pyrimidine metabolism; CTP biosynthesis via de novo pathway; UDP from UMP (UMPK route): step 1/1. With respect to regulation, inhibited by UTP. Its function is as follows. Catalyzes the reversible phosphorylation of UMP to UDP. The protein is Uridylate kinase of Prochlorococcus marinus subsp. pastoris (strain CCMP1986 / NIES-2087 / MED4).